The sequence spans 434 residues: Nicotinate phosphoribosyltransferase (434 aa).

His242 carries the phosphohistidine; by autocatalysis modification.

The protein belongs to the NAPRTase family. In terms of processing, transiently phosphorylated on a His residue during the reaction cycle. Phosphorylation strongly increases the affinity for substrates and increases the rate of nicotinate D-ribonucleotide production. Dephosphorylation regenerates the low-affinity form of the enzyme, leading to product release.

The catalysed reaction is nicotinate + 5-phospho-alpha-D-ribose 1-diphosphate + ATP + H2O = nicotinate beta-D-ribonucleotide + ADP + phosphate + diphosphate. It participates in cofactor biosynthesis; NAD(+) biosynthesis; nicotinate D-ribonucleotide from nicotinate: step 1/1. Its function is as follows. Catalyzes the synthesis of beta-nicotinate D-ribonucleotide from nicotinate and 5-phospho-D-ribose 1-phosphate at the expense of ATP. The chain is Nicotinate phosphoribosyltransferase from Brucella abortus (strain S19).